Here is a 76-residue protein sequence, read N- to C-terminus: Spermatid nuclear transition protein 3 (76 aa).

Residues 1–11 (AKVTEKSWQPQ) are compositionally biased toward polar residues. 2 disordered regions span residues 1–34 (AKVT…GKVR) and 56–76 (VITT…ETIP). A compositionally biased stretch (basic residues) spans 16–34 (KRWKKRKTPSQPRSRGKVR).

The protein localises to the nucleus. The protein resides in the chromosome. Its function is as follows. Involved in nuclear basic protein transition: histones are replaced by spermatid specific proteins which are themselves replaced by protamines in late spermatids. In Sus scrofa (Pig), this protein is Spermatid nuclear transition protein 3 (TNP3).